The sequence spans 429 residues: 3-phosphoshikimate 1-carboxyvinyltransferase (429 aa).

Residues lysine 22, serine 23, and arginine 27 each contribute to the 3-phosphoshikimate site. Residue lysine 22 coordinates phosphoenolpyruvate. Residues glycine 94 and arginine 122 each coordinate phosphoenolpyruvate. Residues serine 167, glutamine 169, aspartate 315, and lysine 342 each contribute to the 3-phosphoshikimate site. Residue glutamine 169 participates in phosphoenolpyruvate binding. Aspartate 315 serves as the catalytic Proton acceptor. Arginine 346 and arginine 388 together coordinate phosphoenolpyruvate.

The protein belongs to the EPSP synthase family. As to quaternary structure, monomer.

The protein localises to the cytoplasm. The catalysed reaction is 3-phosphoshikimate + phosphoenolpyruvate = 5-O-(1-carboxyvinyl)-3-phosphoshikimate + phosphate. Its pathway is metabolic intermediate biosynthesis; chorismate biosynthesis; chorismate from D-erythrose 4-phosphate and phosphoenolpyruvate: step 6/7. Its function is as follows. Catalyzes the transfer of the enolpyruvyl moiety of phosphoenolpyruvate (PEP) to the 5-hydroxyl of shikimate-3-phosphate (S3P) to produce enolpyruvyl shikimate-3-phosphate and inorganic phosphate. This Geotalea daltonii (strain DSM 22248 / JCM 15807 / FRC-32) (Geobacter daltonii) protein is 3-phosphoshikimate 1-carboxyvinyltransferase.